Reading from the N-terminus, the 61-residue chain is Large ribosomal subunit protein bL28 (61 aa).

A disordered region spans residues 1–27; sequence MAKDFVTGKKTTFGNTRSHALNSSSRS. Residues 9–27 are compositionally biased toward polar residues; the sequence is KKTTFGNTRSHALNSSSRS.

Belongs to the bacterial ribosomal protein bL28 family.

The protein is Large ribosomal subunit protein bL28 of Lactobacillus delbrueckii subsp. bulgaricus (strain ATCC 11842 / DSM 20081 / BCRC 10696 / JCM 1002 / NBRC 13953 / NCIMB 11778 / NCTC 12712 / WDCM 00102 / Lb 14).